We begin with the raw amino-acid sequence, 261 residues long: Ribosomal RNA small subunit methyltransferase A (261 aa).

S-adenosyl-L-methionine-binding residues include His-12, Leu-14, Gly-39, Glu-60, Asp-81, and Asn-104.

The protein belongs to the class I-like SAM-binding methyltransferase superfamily. rRNA adenine N(6)-methyltransferase family. RsmA subfamily.

The protein localises to the cytoplasm. The enzyme catalyses adenosine(1518)/adenosine(1519) in 16S rRNA + 4 S-adenosyl-L-methionine = N(6)-dimethyladenosine(1518)/N(6)-dimethyladenosine(1519) in 16S rRNA + 4 S-adenosyl-L-homocysteine + 4 H(+). Functionally, specifically dimethylates two adjacent adenosines (A1518 and A1519) in the loop of a conserved hairpin near the 3'-end of 16S rRNA in the 30S particle. May play a critical role in biogenesis of 30S subunits. In Albidiferax ferrireducens (strain ATCC BAA-621 / DSM 15236 / T118) (Rhodoferax ferrireducens), this protein is Ribosomal RNA small subunit methyltransferase A.